The following is a 932-amino-acid chain: Isoleucine--tRNA ligase (932 aa).

A 'HIGH' region motif is present at residues 58–68; that stretch reads PYANGDIHIGH. L-isoleucyl-5'-AMP is bound at residue glutamate 559. The 'KMSKS' region signature appears at 600–604; it reads KMSKS. Lysine 603 lines the ATP pocket. Positions 895, 898, 915, and 918 each coordinate Zn(2+).

It belongs to the class-I aminoacyl-tRNA synthetase family. IleS type 1 subfamily. As to quaternary structure, monomer. Zn(2+) serves as cofactor.

It is found in the cytoplasm. It catalyses the reaction tRNA(Ile) + L-isoleucine + ATP = L-isoleucyl-tRNA(Ile) + AMP + diphosphate. Its function is as follows. Catalyzes the attachment of isoleucine to tRNA(Ile). As IleRS can inadvertently accommodate and process structurally similar amino acids such as valine, to avoid such errors it has two additional distinct tRNA(Ile)-dependent editing activities. One activity is designated as 'pretransfer' editing and involves the hydrolysis of activated Val-AMP. The other activity is designated 'posttransfer' editing and involves deacylation of mischarged Val-tRNA(Ile). The chain is Isoleucine--tRNA ligase from Saccharophagus degradans (strain 2-40 / ATCC 43961 / DSM 17024).